A 1872-amino-acid chain; its full sequence is Ral GTPase-activating protein subunit alpha-2 (1872 aa).

The disordered stretch occupies residues 350-370; it reads DGAGSTEQDKSHSNSSTLSDR. Phosphoserine is present on residues Ser373, Ser376, and Ser379. The span at 445-469 shows a compositional bias: basic and acidic residues; the sequence is PDKKDVAQEDADKLGLSETDSKEAS. A disordered region spans residues 445-481; that stretch reads PDKKDVAQEDADKLGLSETDSKEASSESSGHKRSSSW. Ser486 is modified (phosphoserine). Ser696 bears the Phosphoserine; by PKB mark. Disordered regions lie at residues 711-730 and 758-813; these read FRSATTSGAPGVEKARNTVR and QQVP…GITM. Thr715 bears the Phosphothreonine; by PKB mark. Composition is skewed to polar residues over residues 758–768 and 775–795; these read QQVPRSSSTSD and SDSSQGQKVEHSQNLSSSEPK. The span at 796–810 shows a compositional bias: basic and acidic residues; the sequence is SVQESKGHVTHEHEG. Ser819 and Ser820 each carry phosphoserine. A disordered region spans residues 831-851; that stretch reads QQAHGRCRQRQTSESTGSDTV. Residues 840–849 show a composition bias toward polar residues; it reads RQTSESTGSD. Ser1592 bears the Phosphoserine mark. The Rap-GAP domain maps to 1634–1842; that stretch reads LKNLDSRQCR…EERALYLEAI (209 aa).

In terms of assembly, component of the heterodimeric RalGAP2 complex with RALGAPB. Heterodimerization is required for activity. In terms of tissue distribution, abundantly expressed in testis, pancreas, lung, thymus, brown fat, and white fat.

The protein resides in the cytoplasm. In terms of biological role, catalytic subunit of the heterodimeric RalGAP2 complex which acts as a GTPase activator for the Ras-like small GTPases RALA and RALB. This is Ral GTPase-activating protein subunit alpha-2 (Ralgapa2) from Mus musculus (Mouse).